Here is a 352-residue protein sequence, read N- to C-terminus: UDP-N-acetylglucosamine--N-acetylmuramyl-(pentapeptide) pyrophosphoryl-undecaprenol N-acetylglucosamine transferase (352 aa).

UDP-N-acetyl-alpha-D-glucosamine contacts are provided by S195 and Q287.

It belongs to the glycosyltransferase 28 family. MurG subfamily.

It is found in the cell membrane. It carries out the reaction Mur2Ac(oyl-L-Ala-gamma-D-Glu-L-Lys-D-Ala-D-Ala)-di-trans,octa-cis-undecaprenyl diphosphate + UDP-N-acetyl-alpha-D-glucosamine = beta-D-GlcNAc-(1-&gt;4)-Mur2Ac(oyl-L-Ala-gamma-D-Glu-L-Lys-D-Ala-D-Ala)-di-trans,octa-cis-undecaprenyl diphosphate + UDP + H(+). Its pathway is cell wall biogenesis; peptidoglycan biosynthesis. Cell wall formation. Catalyzes the transfer of a GlcNAc subunit on undecaprenyl-pyrophosphoryl-MurNAc-pentapeptide (lipid intermediate I) to form undecaprenyl-pyrophosphoryl-MurNAc-(pentapeptide)GlcNAc (lipid intermediate II). This is UDP-N-acetylglucosamine--N-acetylmuramyl-(pentapeptide) pyrophosphoryl-undecaprenol N-acetylglucosamine transferase from Streptococcus pneumoniae (strain CGSP14).